We begin with the raw amino-acid sequence, 382 residues long: Sulfate adenylyltransferase (382 aa).

Belongs to the sulfate adenylyltransferase family.

The catalysed reaction is sulfate + ATP + H(+) = adenosine 5'-phosphosulfate + diphosphate. It functions in the pathway sulfur metabolism; hydrogen sulfide biosynthesis; sulfite from sulfate: step 1/3. This chain is Sulfate adenylyltransferase, found in Staphylothermus marinus (strain ATCC 43588 / DSM 3639 / JCM 9404 / F1).